Consider the following 125-residue polypeptide: uncharacterized protein (125 aa).

2 consecutive transmembrane segments (helical) span residues 22–44 and 54–73; these read TPLM…NAAV and YMGI…SVLM.

This sequence belongs to the bacteriophage holin family. Cp-1 holin subfamily.

Its subcellular location is the cell membrane. This is an uncharacterized protein from Clostridium acetobutylicum (strain ATCC 824 / DSM 792 / JCM 1419 / IAM 19013 / LMG 5710 / NBRC 13948 / NRRL B-527 / VKM B-1787 / 2291 / W).